A 169-amino-acid chain; its full sequence is uncharacterized protein (169 aa).

Residues 35-163 (LIGRGTFILL…PYCPDSLQAL (129 aa)) form the Nudix hydrolase domain. The Nudix box signature appears at 81–103 (YADSAARELEEELGIRDAVLREH). E88 and E92 together coordinate Mg(2+).

Belongs to the Nudix hydrolase family. Mg(2+) serves as cofactor.

This is an uncharacterized protein from Pseudomonas aeruginosa (strain ATCC 15692 / DSM 22644 / CIP 104116 / JCM 14847 / LMG 12228 / 1C / PRS 101 / PAO1).